The primary structure comprises 216 residues: N-glycosylase/DNA lyase (216 aa).

The 8-oxoguanine site is built by Gln-27, Ser-48, and Trp-59. The interval 106-170 is helix-hairpin-helix; the sequence is EHYYENMVAL…LDYRLKKINP (65 aa). Catalysis depends on Lys-130, which acts as the Schiff-base intermediate with DNA. Residues Phe-134 and Pro-160 each contribute to the 8-oxoguanine site. The active site involves Asp-162. 2 residues coordinate 8-oxoguanine: Asp-190 and Trp-194.

Belongs to the archaeal N-glycosylase/DNA lyase (AGOG) family.

The catalysed reaction is 2'-deoxyribonucleotide-(2'-deoxyribose 5'-phosphate)-2'-deoxyribonucleotide-DNA = a 3'-end 2'-deoxyribonucleotide-(2,3-dehydro-2,3-deoxyribose 5'-phosphate)-DNA + a 5'-end 5'-phospho-2'-deoxyribonucleoside-DNA + H(+). DNA repair enzyme that is part of the base excision repair (BER) pathway; protects from oxidative damage by removing the major product of DNA oxidation, 8-oxoguanine (GO), from single- and double-stranded DNA substrates. In Nanoarchaeum equitans (strain Kin4-M), this protein is N-glycosylase/DNA lyase.